The primary structure comprises 265 residues: 3-methyl-2-oxobutanoate hydroxymethyltransferase (265 aa).

Residues aspartate 41 and aspartate 80 each coordinate Mg(2+). 3-methyl-2-oxobutanoate-binding positions include aspartate 41–serine 42, aspartate 80, and lysine 110. Residue glutamate 112 participates in Mg(2+) binding. Glutamate 179 functions as the Proton acceptor in the catalytic mechanism.

This sequence belongs to the PanB family. In terms of assembly, homodecamer; pentamer of dimers. It depends on Mg(2+) as a cofactor.

It localises to the cytoplasm. It carries out the reaction 3-methyl-2-oxobutanoate + (6R)-5,10-methylene-5,6,7,8-tetrahydrofolate + H2O = 2-dehydropantoate + (6S)-5,6,7,8-tetrahydrofolate. It functions in the pathway cofactor biosynthesis; (R)-pantothenate biosynthesis; (R)-pantoate from 3-methyl-2-oxobutanoate: step 1/2. Catalyzes the reversible reaction in which hydroxymethyl group from 5,10-methylenetetrahydrofolate is transferred onto alpha-ketoisovalerate to form ketopantoate. The protein is 3-methyl-2-oxobutanoate hydroxymethyltransferase of Pseudothermotoga lettingae (strain ATCC BAA-301 / DSM 14385 / NBRC 107922 / TMO) (Thermotoga lettingae).